Consider the following 457-residue polypeptide: MALWGGRFTQAADGRFKQFNDSLRFDYRLAEQDIIGSVAWSKALVTVGVLTAQEQSQLEGALNTLLEEVLENPHAILESDAEDIHSWVEGKLIDKVGPLGKKLHTGRSRNDQVATDLKLWCKTQVHALLSATRQLQQALVVTAEENQDAVMPGYTHLQRAQPVTFAHWCLAYVEMLARDESRLKDTLKRLDVSPLGSGALAGTAYEIDREQLAGWLGFASATRNSLDSVSDRDHVLELLSDAAISMVHLSRFAEDLIFFNSGEAGFVELSDRVTSGSSLMPQKKNPDALELIRGKCGRVQGALTGMMMTLKGLPLAYNKDMQEDKEGLFDALDTWLDCLHMAALVLDGIQVKRPRCQEAAQQGYANATELADYLVAKGVPFREAHHIVGEAVVEAIRQGKPLEDLALGDLQKFSPVISDDVYPVLSLQSCLDKRAAQGGVSPVQVAQAISAAKARLA.

This sequence belongs to the lyase 1 family. Argininosuccinate lyase subfamily.

The protein localises to the cytoplasm. It carries out the reaction 2-(N(omega)-L-arginino)succinate = fumarate + L-arginine. It functions in the pathway amino-acid biosynthesis; L-arginine biosynthesis; L-arginine from L-ornithine and carbamoyl phosphate: step 3/3. In Cronobacter sakazakii (strain ATCC BAA-894) (Enterobacter sakazakii), this protein is Argininosuccinate lyase.